The sequence spans 414 residues: 2,3-diketo-5-methylthiopentyl-1-phosphate enolase (414 aa).

Lysine 99 (proton acceptor) is an active-site residue. Residues lysine 148, 174-177 (KDDE), histidine 265, glycine 338, and 360-361 (GG) contribute to the substrate site. Lysine 174, aspartate 176, and glutamate 177 together coordinate Mg(2+). Position 174 is an N6-carboxylysine (lysine 174).

This sequence belongs to the RuBisCO large chain family. Type IV subfamily. Homodimer. Mg(2+) is required as a cofactor.

The catalysed reaction is 5-methylsulfanyl-2,3-dioxopentyl phosphate = 2-hydroxy-5-methylsulfanyl-3-oxopent-1-enyl phosphate. The protein operates within amino-acid biosynthesis; L-methionine biosynthesis via salvage pathway; L-methionine from S-methyl-5-thio-alpha-D-ribose 1-phosphate: step 3/6. Its function is as follows. Catalyzes the enolization of 2,3-diketo-5-methylthiopentyl-1-phosphate (DK-MTP-1-P) into 2-hydroxy-3-keto-5-methylthiopentenyl-1-phosphate (HK-MTPenyl-1-P). This Bacillus mycoides (strain KBAB4) (Bacillus weihenstephanensis) protein is 2,3-diketo-5-methylthiopentyl-1-phosphate enolase.